Reading from the N-terminus, the 981-residue chain is NAD(+) hydrolase tir-1 (981 aa).

3 disordered regions span residues 1–31, 74–128, and 173–225; these read MLPNRKPPRPSPSFQSLNNNNQRFPLRRSLK, QNEQ…PTQP, and LSTP…PVDQ. Polar residues-rich tracts occupy residues 12–23 and 74–85; these read PSFQSLNNNNQR and QNEQDGETTSTD. Over residues 87 to 97 the composition is skewed to acidic residues; it reads AFFELDDDDDL. The span at 98-114 shows a compositional bias: low complexity; that stretch reads SSPSVPGSPVDPPSISV. Positions 115 to 128 are enriched in pro residues; the sequence is PLPPKSAPPCPTQP. Residues 182–200 are compositionally biased toward basic and acidic residues; the sequence is EEMHNGQVRKESEYRRFKS. SAM domains lie at 614 to 678 and 684 to 750; these read WTCA…LKVA and VDES…AKHP. Residues 760–857 enclose the TIR domain; it reads KQIDVFISYR…EHQKNIIPIF (98 aa). Position 769-770 (769-770) interacts with NAD(+); it reads RR. Glu842 is an active-site residue. Polar residues-rich tracts occupy residues 908 to 939, 954 to 963, and 972 to 981; these read TTPTTKEMPSISRKTTQQRWQTTNTVSRTGPS, FTPTGSQERA, and PSASTTSDRN. Residues 908-981 form a disordered region; the sequence is TTPTTKEMPS…PSASTTSDRN (74 aa).

This sequence belongs to the SARM1 family. Homodimer. Interacts with rab-1, pal-1 and unc-43. As to expression, highly expressed in hypodermis. Localizes to postsynaptic regions of axons.

The protein resides in the cytoplasm. The catalysed reaction is NAD(+) + H2O = ADP-D-ribose + nicotinamide + H(+). In terms of biological role, NAD(+) hydrolase, which plays a key role in non-apoptotic cell death by regulating NAD(+) metabolism. In response to stress, homooligomerizes and catalyzes cleavage of NAD(+) into ADP-D-ribose (ADPR) and nicotinamide; NAD(+) cleavage promoting non-apoptotic neuronal cell death. In males, involved in non-apoptotic death of the linker cell which guides gonad elongation during larval development. Required for both innate immune response and specification of AWC(OFF) neuron. During late embryogenesis, it acts downstream of CAMKII (unc-43) to regulate specification of asymmetric odorant receptors in AWC(OFF) neuron via the nsy-1/ASK1 pmk-1/p38 MAP kinase signaling cascade. Required to localize nsy-1 to postsynaptic regions of AWC neuron, suggesting that it may act by assembling a signaling complex that regulate odorant receptor expression. Also plays a central role in resistance to infection to a broad range of bacterial and fungi pathogens, possibly by activating pmk-1, independently of the NF-kappa-B pathway. Required for expression of antimicrobial peptides nlp-29 and nlp-31. Its role in immune response and neuron specification may be mediated by the same nsy-1/ASK1 pmk-1/p38 MAP kinase cascade signaling pathway. Involved in the response to anoxic conditions probably by activating the p38 pathway composed of nsy-1/sek-1/pmk-1. Involved in regulation of the serotonergic response of ADF neurons to pathogenic food. In addition, plays a role in the up-regulation of gcs-1 upon arsenite treatment, most likely through activation of pmk-1, to confer protection against toxicity induced by heavy metals. Its function is as follows. Regulates expression of antimicrobial peptide nlp-29 in response to fungal infection or physical injury. The sequence is that of NAD(+) hydrolase tir-1 from Caenorhabditis elegans.